A 471-amino-acid chain; its full sequence is UDP-N-acetylmuramate--L-alanine ligase (471 aa).

Gly-114–Thr-120 is a binding site for ATP.

The protein belongs to the MurCDEF family.

The protein localises to the cytoplasm. It catalyses the reaction UDP-N-acetyl-alpha-D-muramate + L-alanine + ATP = UDP-N-acetyl-alpha-D-muramoyl-L-alanine + ADP + phosphate + H(+). The protein operates within cell wall biogenesis; peptidoglycan biosynthesis. In terms of biological role, cell wall formation. The sequence is that of UDP-N-acetylmuramate--L-alanine ligase from Rhizobium johnstonii (strain DSM 114642 / LMG 32736 / 3841) (Rhizobium leguminosarum bv. viciae).